A 115-amino-acid chain; its full sequence is UPF0235 protein CTA_0423 (115 aa).

It belongs to the UPF0235 family.

The protein is UPF0235 protein CTA_0423 of Chlamydia trachomatis serovar A (strain ATCC VR-571B / DSM 19440 / HAR-13).